The sequence spans 580 residues: Cleavage stimulation factor subunit 2 (580 aa).

Residue Ser14 is modified to Phosphoserine. The RRM domain occupies 16 to 94 (RSVFVGNIPY…RALRVDNAAS (79 aa)). The interactions with CSTF3 and SYMPK stretch occupies residues 108-248 (APVIESPYGE…VNGAPPMMQA (141 aa)). Lys189 participates in a covalent cross-link: Glycyl lysine isopeptide (Lys-Gly) (interchain with G-Cter in SUMO2). Arg308 bears the Omega-N-methylarginine mark. 2 disordered regions span residues 311–331 (LPTN…DPRG) and 347–414 (LGPP…RGLD). 2 stretches are compositionally biased toward basic and acidic residues: residues 363–376 (PGHE…HDMR) and 405–414 (RGGRDPRGLD). A 1; approximate repeat occupies 413–417 (LDARG). Residues 413–472 (LDARGMEARAMEARGLDARGLEARAMEARAMEARAMEARAMEARAMEARAMEARGMDTRG) form a 12 X 5 AA tandem repeats of M-E-A-R-[AG] region. 2 consecutive repeat copies span residues 418–422 (MEARA) and 423–427 (MEARG). A 4; approximate repeat occupies 428-432 (LDARG). A 5; approximate repeat occupies 433–437 (LEARA). A run of 6 repeats spans residues 438–442 (MEARA), 443–447 (MEARA), 448–452 (MEARA), 453–457 (MEARA), 458–462 (MEARA), and 463–467 (MEARG). One copy of the 12; approximate repeat lies at 468 to 472 (MDTRG). Arg471 and Arg478 each carry omega-N-methylarginine. Residues 512–536 (MQGASMQGGSQPGGFSPGQSQVTPQ) form a disordered region. An interaction with RPO2TC1 region spans residues 517-580 (MQGGSQPGGF…EQIQKSTGAP (64 aa)). Residues Ser521 and Ser527 each carry the phosphoserine modification.

As to quaternary structure, the CSTF complex is composed of CSTF1 (50 kDa subunit), CSTF2 (64 kDa subunit) and CSTF3 (77 kDa subunit). CSTF2 directly interacts with CSTF3, SYMPK and RPO2TC1. Interacts with HSF1 in heat-stressed cells. Interacts with CPSF2, CPSF3 and FIP1L1. Interacts with DDX1. As to expression, expressed in most somatic cell types (at protein level). Highly expressed in testis, except in meiotic spermatocytes.

It localises to the nucleus. In terms of biological role, one of the multiple factors required for polyadenylation and 3'-end cleavage of mammalian pre-mRNAs. This subunit is directly involved in the binding to pre-mRNAs. This Mus musculus (Mouse) protein is Cleavage stimulation factor subunit 2 (Cstf2).